The chain runs to 296 residues: Immediate early response gene 5-like protein (296 aa).

The protein belongs to the IER family.

The polypeptide is Immediate early response gene 5-like protein (ier5l) (Xenopus tropicalis (Western clawed frog)).